Reading from the N-terminus, the 342-residue chain is tRNA-specific 2-thiouridylase MnmA (342 aa).

Residues 6 to 13 (GMSGGVDS) and leucine 32 contribute to the ATP site. Cysteine 99 serves as the catalytic Nucleophile. A disulfide bridge links cysteine 99 with cysteine 190. Glycine 124 lines the ATP pocket. Positions 140-142 (KDQ) are interaction with tRNA. Catalysis depends on cysteine 190, which acts as the Cysteine persulfide intermediate. The segment at 292-293 (RY) is interaction with tRNA.

This sequence belongs to the MnmA/TRMU family.

It localises to the cytoplasm. The enzyme catalyses S-sulfanyl-L-cysteinyl-[protein] + uridine(34) in tRNA + AH2 + ATP = 2-thiouridine(34) in tRNA + L-cysteinyl-[protein] + A + AMP + diphosphate + H(+). Its function is as follows. Catalyzes the 2-thiolation of uridine at the wobble position (U34) of tRNA, leading to the formation of s(2)U34. This chain is tRNA-specific 2-thiouridylase MnmA, found in Hydrogenobaculum sp. (strain Y04AAS1).